The primary structure comprises 214 residues: Urease accessory protein UreE (214 aa).

Residues 163 to 214 (NAEPSGVDHSHEATDSGHGYGEDHDHDHSHDHNHDHDHNHDHDHSHSHDSHE) form a disordered region. A compositionally biased stretch (basic and acidic residues) spans 168–214 (GVDHSHEATDSGHGYGEDHDHDHSHDHNHDHDHNHDHDHSHSHDSHE).

This sequence belongs to the UreE family.

It localises to the cytoplasm. Involved in urease metallocenter assembly. Binds nickel. Probably functions as a nickel donor during metallocenter assembly. The protein is Urease accessory protein UreE of Natronomonas pharaonis (strain ATCC 35678 / DSM 2160 / CIP 103997 / JCM 8858 / NBRC 14720 / NCIMB 2260 / Gabara) (Halobacterium pharaonis).